The sequence spans 516 residues: Methionine--tRNA ligase (516 aa).

A 'HIGH' region motif is present at residues 14 to 24; the sequence is SYPNGKPHIGH. Positions 302–306 match the 'KMSKS' region motif; that stretch reads KMSKS. Lysine 305 provides a ligand contact to ATP.

It belongs to the class-I aminoacyl-tRNA synthetase family. MetG type 2B subfamily. Monomer.

The protein resides in the cytoplasm. The catalysed reaction is tRNA(Met) + L-methionine + ATP = L-methionyl-tRNA(Met) + AMP + diphosphate. Functionally, is required not only for elongation of protein synthesis but also for the initiation of all mRNA translation through initiator tRNA(fMet) aminoacylation. The polypeptide is Methionine--tRNA ligase (Rhizobium meliloti (strain 1021) (Ensifer meliloti)).